We begin with the raw amino-acid sequence, 190 residues long: Adenine phosphoribosyltransferase (190 aa).

Belongs to the purine/pyrimidine phosphoribosyltransferase family. In terms of assembly, homodimer.

Its subcellular location is the cytoplasm. It carries out the reaction AMP + diphosphate = 5-phospho-alpha-D-ribose 1-diphosphate + adenine. The protein operates within purine metabolism; AMP biosynthesis via salvage pathway; AMP from adenine: step 1/1. In terms of biological role, catalyzes a salvage reaction resulting in the formation of AMP, that is energically less costly than de novo synthesis. In Cupriavidus taiwanensis (strain DSM 17343 / BCRC 17206 / CCUG 44338 / CIP 107171 / LMG 19424 / R1) (Ralstonia taiwanensis (strain LMG 19424)), this protein is Adenine phosphoribosyltransferase.